We begin with the raw amino-acid sequence, 493 residues long: Cytochrome c-552 (493 aa).

The signal sequence occupies residues 1-25 (MEKKLKSWQGWLLFCGAMAVVFVLG). H116 serves as a coordination point for heme c. Positions 144, 147, and 148 each coordinate heme. C182, C185, H186, C224, C227, and H228 together coordinate heme c. Residues E230, Y231, K276, and Q278 each coordinate Ca(2+). Y231 is a substrate binding site. H279 lines the substrate pocket. Positions 290, 297, 300, 301, 315, 328, 331, 332, and 407 each coordinate heme c.

It belongs to the cytochrome c-552 family. It depends on Ca(2+) as a cofactor. Heme c is required as a cofactor.

It localises to the periplasm. The catalysed reaction is 6 Fe(III)-[cytochrome c] + NH4(+) + 2 H2O = 6 Fe(II)-[cytochrome c] + nitrite + 8 H(+). It participates in nitrogen metabolism; nitrate reduction (assimilation). Functionally, catalyzes the reduction of nitrite to ammonia, consuming six electrons in the process. This is Cytochrome c-552 from Bacteroides fragilis (strain YCH46).